The following is a 305-amino-acid chain: MGSMAFHKSRLFLTFGDASEIWLSTLSHLTRKNYASGINFLVSLEILDLSETLIKAISLDHSESLFKIKSLDVFNGKVVSEASKQARAACYISFTKFLYRLTKGYIKPAIPLKDFGNTTFFKIRDKIKTESISKQEWTVFFEALRIVNYRDYLIGKLIVQGIRKLDEILSLRTDDLFFASNQISFRIKKRQNKETKILITFPISLMEELQKYTCGRNGRVFVSKIGIPVTTSQVAHNFRLAEFYSAMKIKITPRVLRASALIHLKQIGLKDEEIMRISCLSSRQSVCSYCSGEEVSPLVQTPPIL.

A Core-binding (CB) domain is found at 13-99 (LTFGDASEIW…CYISFTKFLY (87 aa)). One can recognise a Tyr recombinase domain in the interval 127-305 (IKTESISKQE…SPLVQTPPIL (179 aa)). Active-site residues include lysine 188 and arginine 257. Tyrosine 289 (O-(3'-phospho-DNA)-tyrosine intermediate) is an active-site residue.

The protein belongs to the 'phage' integrase family.

This Chlamydia trachomatis serovar L2 (strain ATCC VR-902B / DSM 19102 / 434/Bu) protein is Virulence plasmid integrase pGP7-D.